The chain runs to 255 residues: uncharacterized protein (255 aa).

Basic residues predominate over residues 1 to 10 (MSDSIHRRKV). A disordered region spans residues 1 to 78 (MSDSIHRRKV…SPMRGLPMEE (78 aa)). Basic and acidic residues predominate over residues 44-61 (VFERSFSEPSLNRHRDGQ).

This is an uncharacterized protein from Arabidopsis thaliana (Mouse-ear cress).